The primary structure comprises 388 residues: Probable acetyl-CoA acetyltransferase (388 aa).

The Acyl-thioester intermediate role is filled by cysteine 84. An Isoglutamyl lysine isopeptide (Lys-Gln) (interchain with Q-Cter in protein Pup) cross-link involves residue lysine 187. Residues histidine 345 and cysteine 375 each act as proton acceptor in the active site.

The protein belongs to the thiolase-like superfamily. Thiolase family.

The enzyme catalyses 2 acetyl-CoA = acetoacetyl-CoA + CoA. In Mycolicibacterium smegmatis (strain ATCC 700084 / mc(2)155) (Mycobacterium smegmatis), this protein is Probable acetyl-CoA acetyltransferase.